The primary structure comprises 291 residues: Ribosomal RNA small subunit methyltransferase A (291 aa).

The S-adenosyl-L-methionine site is built by His-37, Leu-39, Gly-64, Glu-85, Asp-110, and Asn-131.

This sequence belongs to the class I-like SAM-binding methyltransferase superfamily. rRNA adenine N(6)-methyltransferase family. RsmA subfamily.

It localises to the cytoplasm. It catalyses the reaction adenosine(1518)/adenosine(1519) in 16S rRNA + 4 S-adenosyl-L-methionine = N(6)-dimethyladenosine(1518)/N(6)-dimethyladenosine(1519) in 16S rRNA + 4 S-adenosyl-L-homocysteine + 4 H(+). Its function is as follows. Specifically dimethylates two adjacent adenosines (A1518 and A1519) in the loop of a conserved hairpin near the 3'-end of 16S rRNA in the 30S particle. May play a critical role in biogenesis of 30S subunits. The chain is Ribosomal RNA small subunit methyltransferase A from Dehalococcoides mccartyi (strain ATCC BAA-2266 / KCTC 15142 / 195) (Dehalococcoides ethenogenes (strain 195)).